Reading from the N-terminus, the 256-residue chain is Thiazole synthase (256 aa).

K96 (schiff-base intermediate with DXP) is an active-site residue. 1-deoxy-D-xylulose 5-phosphate contacts are provided by residues G157, 184 to 185, and 206 to 207; these read AG and NT.

Belongs to the ThiG family. Homotetramer. Forms heterodimers with either ThiH or ThiS.

It localises to the cytoplasm. It carries out the reaction [ThiS sulfur-carrier protein]-C-terminal-Gly-aminoethanethioate + 2-iminoacetate + 1-deoxy-D-xylulose 5-phosphate = [ThiS sulfur-carrier protein]-C-terminal Gly-Gly + 2-[(2R,5Z)-2-carboxy-4-methylthiazol-5(2H)-ylidene]ethyl phosphate + 2 H2O + H(+). It participates in cofactor biosynthesis; thiamine diphosphate biosynthesis. Its function is as follows. Catalyzes the rearrangement of 1-deoxy-D-xylulose 5-phosphate (DXP) to produce the thiazole phosphate moiety of thiamine. Sulfur is provided by the thiocarboxylate moiety of the carrier protein ThiS. In vitro, sulfur can be provided by H(2)S. This chain is Thiazole synthase, found in Brucella suis (strain ATCC 23445 / NCTC 10510).